Consider the following 211-residue polypeptide: MHSIAIFGGTFDPVHNGHIKTSLAIQANFGFDSYYFLPCKSPAIKPPSFASSEQRVEMLKLALKPYPDFKIDTRELDRDTPSYMVYTLQSFRQEYTDSSLTLIIGYDGLLNLPQWYQWEKIISLANLLVINREEFFQQPVPKSVQTLLNQYRNDDKNILLNHHAGSICLYNAGHYDISSTKIREQLKQHKDVKSNLPDLVYDYIKKQELYQ.

This sequence belongs to the NadD family.

It catalyses the reaction nicotinate beta-D-ribonucleotide + ATP + H(+) = deamido-NAD(+) + diphosphate. It participates in cofactor biosynthesis; NAD(+) biosynthesis; deamido-NAD(+) from nicotinate D-ribonucleotide: step 1/1. Catalyzes the reversible adenylation of nicotinate mononucleotide (NaMN) to nicotinic acid adenine dinucleotide (NaAD). The sequence is that of Probable nicotinate-nucleotide adenylyltransferase from Legionella pneumophila (strain Paris).